Consider the following 217-residue polypeptide: Mediator of RNA polymerase II transcription subunit 18 (217 aa).

It belongs to the Mediator complex subunit 18 family. As to quaternary structure, component of the Mediator complex, which includes at least CDK8, MED4, MED6, MED11, MED14, MED17, MED18, MED20, MED21, MED22, MED27, MED28, MED30 and MED31.

It is found in the nucleus. Functionally, component of the Mediator complex, a coactivator involved in the regulated transcription of nearly all RNA polymerase II-dependent genes. Mediator functions as a bridge to convey information from gene-specific regulatory proteins to the basal RNA polymerase II transcription machinery. Mediator is recruited to promoters by direct interactions with regulatory proteins and serves as a scaffold for the assembly of a functional preinitiation complex with RNA polymerase II and the general transcription factors. The protein is Mediator of RNA polymerase II transcription subunit 18 (MED18) of Drosophila melanogaster (Fruit fly).